Consider the following 270-residue polypeptide: Dihydroorotate dehydrogenase B (NAD(+)), catalytic subunit (270 aa).

FMN contacts are provided by residues Ser-12 and 35–36; that span reads KT. Residues Lys-35, 59–63, and Asn-114 each bind substrate; that span reads NRIGL. Asn-114 provides a ligand contact to FMN. Cys-117 (nucleophile) is an active-site residue. Lys-153 and Val-179 together coordinate FMN. 180–181 provides a ligand contact to substrate; it reads NT. FMN-binding positions include Gly-199, 226-227, and 248-249; these read GG and GS.

This sequence belongs to the dihydroorotate dehydrogenase family. Type 1 subfamily. In terms of assembly, heterotetramer of 2 PyrK and 2 PyrD type B subunits. FMN serves as cofactor.

Its subcellular location is the cytoplasm. The enzyme catalyses (S)-dihydroorotate + NAD(+) = orotate + NADH + H(+). It participates in pyrimidine metabolism; UMP biosynthesis via de novo pathway; orotate from (S)-dihydroorotate (NAD(+) route): step 1/1. In terms of biological role, catalyzes the conversion of dihydroorotate to orotate with NAD(+) as electron acceptor. This chain is Dihydroorotate dehydrogenase B (NAD(+)), catalytic subunit (pyrD), found in Thermotoga maritima (strain ATCC 43589 / DSM 3109 / JCM 10099 / NBRC 100826 / MSB8).